The chain runs to 720 residues: Engulfment and cell motility protein 2 (720 aa).

Residue tyrosine 48 is modified to Phosphotyrosine. In terms of domain architecture, ELMO spans 310–484; it reads QAQRDIIFEL…QVVREQITRA (175 aa). Serine 503 carries the phosphoserine modification. The region spanning 553–674 is the PH domain; that stretch reads SSFRKIGNRR…LLGKDMSSEL (122 aa). The SH3-binding motif lies at 700-707; it reads PEAPPPVP. Residue tyrosine 717 is modified to Phosphotyrosine.

In terms of assembly, interacts directly with the SH3-domain of DOCK1 via its SH3-binding site. Probably forms a heterotrimeric complex with DOCK1 and RAC1. Interacts with ARHGEF16, DOCK4 and EPHA2; mediates activation of RAC1 by EPHA2. Interacts with ADGRB3. Interacts with AUTS2; the interaction is direct.

The protein resides in the cytoplasm. It localises to the cytosol. It is found in the membrane. In terms of biological role, involved in cytoskeletal rearrangements required for phagocytosis of apoptotic cells and cell motility. Acts in association with DOCK1 and CRK. Was initially proposed to be required in complex with DOCK1 to activate Rac Rho small GTPases. May enhance the guanine nucleotide exchange factor (GEF) activity of DOCK1. The sequence is that of Engulfment and cell motility protein 2 (ELMO2) from Bos taurus (Bovine).